Reading from the N-terminus, the 99-residue chain is MALTKAEMAEKLFDEVGLNKREAKEFVDAFFDVLREALEQGRQVKLSGFGNFDLRRKNQRPGRNPKTGEEIPISARTVVTFRPGQKLKERVEAYAGSGQ.

It belongs to the bacterial histone-like protein family. Heterodimer of an alpha and a beta chain.

Functionally, this protein is one of the two subunits of integration host factor, a specific DNA-binding protein that functions in genetic recombination as well as in transcriptional and translational control. The sequence is that of Integration host factor subunit alpha from Stenotrophomonas maltophilia (strain R551-3).